Consider the following 199-residue polypeptide: FMN-dependent NADH:quinone oxidoreductase (199 aa).

FMN-binding positions include serine 9, 15-17 (SNS), and 95-98 (MYNF).

The protein belongs to the azoreductase type 1 family. Homodimer. It depends on FMN as a cofactor.

The catalysed reaction is 2 a quinone + NADH + H(+) = 2 a 1,4-benzosemiquinone + NAD(+). The enzyme catalyses N,N-dimethyl-1,4-phenylenediamine + anthranilate + 2 NAD(+) = 2-(4-dimethylaminophenyl)diazenylbenzoate + 2 NADH + 2 H(+). Quinone reductase that provides resistance to thiol-specific stress caused by electrophilic quinones. Functionally, also exhibits azoreductase activity. Catalyzes the reductive cleavage of the azo bond in aromatic azo compounds to the corresponding amines. This is FMN-dependent NADH:quinone oxidoreductase from Aromatoleum aromaticum (strain DSM 19018 / LMG 30748 / EbN1) (Azoarcus sp. (strain EbN1)).